We begin with the raw amino-acid sequence, 168 residues long: Small ribosomal subunit protein uS5 (168 aa).

Residues 13–76 (LAEKLIAVNR…EKARRNMINV (64 aa)) enclose the S5 DRBM domain.

This sequence belongs to the universal ribosomal protein uS5 family. As to quaternary structure, part of the 30S ribosomal subunit. Contacts proteins S4 and S8.

Its function is as follows. With S4 and S12 plays an important role in translational accuracy. Functionally, located at the back of the 30S subunit body where it stabilizes the conformation of the head with respect to the body. In Pseudoalteromonas translucida (strain TAC 125), this protein is Small ribosomal subunit protein uS5.